Consider the following 328-residue polypeptide: Cytochrome c biogenesis protein CcsA (328 aa).

A run of 8 helical transmembrane segments spans residues I13–L33, G46–G66, L73–F93, L101–L121, M146–I166, I234–N254, W263–I283, and A295–L315.

This sequence belongs to the CcmF/CycK/Ccl1/NrfE/CcsA family. In terms of assembly, may interact with Ccs1.

It localises to the plastid. The protein localises to the chloroplast thylakoid membrane. Functionally, required during biogenesis of c-type cytochromes (cytochrome c6 and cytochrome f) at the step of heme attachment. This Aethionema grandiflorum (Persian stone-cress) protein is Cytochrome c biogenesis protein CcsA.